The sequence spans 291 residues: GTP-binding protein RHO4 (291 aa).

Positions 14-31 (GNESNIVSQGSPSSSNLP) are enriched in polar residues. Residues 14-45 (GNESNIVSQGSPSSSNLPESPGTLDEKNLPRL) are disordered. 79–86 (GDGAVGKT) provides a ligand contact to GTP. The Effector region motif lies at 101 to 109 (YIPTIFENY). Residues 127–131 (DTAGQ) and 185–188 (LKSD) each bind GTP. The disordered stretch occupies residues 250-273 (THTIKNPFKRNTTRSDIDSSTGDT). 3 positions are modified to phosphoserine: serine 264, serine 268, and serine 276. A Cysteine methyl ester modification is found at cysteine 288. Cysteine 288 is lipidated: S-farnesyl cysteine. The propeptide at 289–291 (IIM) is removed in mature form.

This sequence belongs to the small GTPase superfamily. Rho family. As to quaternary structure, interacts with BEM4.

The protein localises to the cell membrane. The enzyme catalyses GTP + H2O = GDP + phosphate + H(+). Plays an important role in cell growth. Required to keep the uninucleated state. May be involved in the organization of the cytoskeleton which affects microtubule functions. Most likely RHO3 and RHO4 of S.cerevisiae regulate partially overlapping but different pathways. The sequence is that of GTP-binding protein RHO4 (RHO4) from Saccharomyces cerevisiae (strain ATCC 204508 / S288c) (Baker's yeast).